A 498-amino-acid polypeptide reads, in one-letter code: Osteoclast stimulatory transmembrane protein (498 aa).

Over 1–51 (MRTIRAATEHLFGLGWKFWRLGICKAVVPLQAAWKAFSQPVPASCNELLTQ) the chain is Cytoplasmic. Residues 52 to 72 (LLLCVSLASLIAGLAHHWLVS) traverse the membrane as a helical segment. Topologically, residues 73-81 (LQLYPLGPP) are extracellular. A helical transmembrane segment spans residues 82-102 (ALVTSLCGLFVFLSLGLVPPI). Residues 103–121 (RCLFVLSVPTLGSKQGRRL) lie on the Cytoplasmic side of the membrane. The helical transmembrane segment at 122–142 (LLSYSAANLAVAVVPNVLGNV) threads the bilayer. Residues 143 to 226 (RAAGQVLSCV…LARAALGTQR (84 aa)) lie on the Extracellular side of the membrane. A helical transmembrane segment spans residues 227-247 (VVTGLFLLGLLGESAWYLHRY). Residues 248-303 (LTDLRFDNIYATRQLVRQLAQAGATHLLTSPPPWLLQTAQPKLSREELLSCLLRLG) are Cytoplasmic-facing. Residues 304–324 (LLALLLVATAVTVASDYGAFL) traverse the membrane as a helical segment. Over 325-401 (LAQAAVAWAQ…QAQPPRVTAA (77 aa)) the chain is Extracellular. Residues 402–422 (LAAGALQLLAGATLVLQAYAW) traverse the membrane as a helical segment. Topologically, residues 423–498 (RLRHTIAASF…DSLGPPYDLE (76 aa)) are cytoplasmic. Residues 449-498 (QRRHNQSDHLNKQPGTMATRESRKPGQGTRTLESQGPQAHDSLGPPYDLE) are disordered. Polar residues predominate over residues 476–485 (GTRTLESQGP).

Expressed in osteoclast (at protein level). Ubiquitous. Highly expressed in multi-nuclear osteoclast cells compared to mono-nuclear macrophages. Expressed in foreign body giant cells (FBGCs).

It is found in the membrane. Probable cell surface receptor that plays a role in cellular fusion and cell differentiation. Cooperates with DCSTAMP in modulating cell-cell fusion in both osteoclasts and foreign body giant cells (FBGCs). Involved in osteoclast bone resorption. Promotes osteoclast differentiation and may play a role in the multinucleated osteoclast maturation. In Mus musculus (Mouse), this protein is Osteoclast stimulatory transmembrane protein (Ocstamp).